The chain runs to 401 residues: tRNA N6-adenosine threonylcarbamoyltransferase (401 aa).

His111 and His115 together coordinate Fe cation. Substrate is bound by residues 191-195 (LASGG), Asp223, Gly236, and Asn336. Fe cation is bound at residue Asp364.

This sequence belongs to the KAE1 / TsaD family. Fe(2+) is required as a cofactor.

It localises to the cytoplasm. It catalyses the reaction L-threonylcarbamoyladenylate + adenosine(37) in tRNA = N(6)-L-threonylcarbamoyladenosine(37) in tRNA + AMP + H(+). In terms of biological role, required for the formation of a threonylcarbamoyl group on adenosine at position 37 (t(6)A37) in tRNAs that read codons beginning with adenine. Is involved in the transfer of the threonylcarbamoyl moiety of threonylcarbamoyl-AMP (TC-AMP) to the N6 group of A37, together with TsaE and TsaB. TsaD likely plays a direct catalytic role in this reaction. The chain is tRNA N6-adenosine threonylcarbamoyltransferase from Tropheryma whipplei (strain TW08/27) (Whipple's bacillus).